The sequence spans 107 residues: Homeobox protein HD-3 (107 aa).

Residues 6–65 (SKAPRTRMTAGQTRVLMSFFKDNPFPSTTAREKLSKVLGVGPRTVQIWFQNQRQKARGQA) constitute a DNA-binding region (homeobox).

Its subcellular location is the nucleus. The protein is Homeobox protein HD-3 (HD-3) of Encephalitozoon cuniculi (strain GB-M1) (Microsporidian parasite).